The chain runs to 445 residues: AVMGRNLALNIESRGYTVSIFNRSREKTEEVVAENPGKKLVPYYTVKEFVESLETPRRILLMVKAGAGTDAAIDSLKPYLDKGDIIIDGGNTFFQDTIRRNRELSAEGFNFIGTGVSGGEEGALKGPSIMPGGQKEAYELVAPILTKIAAVAEDGEPCVIYIGADGAGHYVKMVHNGIEYGDMQLIAEAYSLLKGGLNLSNEELATTFTEWNEGELSSYLIDITKDIFTKKDEEGKYLVDVILDEAANKGTGKWTSQSSLDLGEPLSLITESVFARYISSLKDQRVAASKVLSGPQAKLAGDKAEFVEKVRRALYLGKIVSYAQGFSQLRAASDEYNWDLNYGEIAKIFRAGCIIRAQFLQKITDAYAENKGIANLLLAPYFKNIADEYQQALRDVVAYAVQNGIPVPTFSAAVAYYDSYRSAVLPANLIQAQRDYFGAHTYKRT.

NADP(+) contacts are provided by residues 1-4 (AVMG), 22-24 (NRS), 63-65 (VKA), and Asn91. Substrate-binding positions include Asn91 and 117 to 119 (SGG). Catalysis depends on Lys172, which acts as the Proton acceptor. 175–176 (HN) serves as a coordination point for substrate. Glu179 serves as the catalytic Proton donor. The substrate site is built by Tyr180, Lys249, Arg276, Arg434, and His440.

It belongs to the 6-phosphogluconate dehydrogenase family. In terms of assembly, homodimer.

The catalysed reaction is 6-phospho-D-gluconate + NADP(+) = D-ribulose 5-phosphate + CO2 + NADPH. It functions in the pathway carbohydrate degradation; pentose phosphate pathway; D-ribulose 5-phosphate from D-glucose 6-phosphate (oxidative stage): step 3/3. In terms of biological role, catalyzes the oxidative decarboxylation of 6-phosphogluconate to ribulose 5-phosphate and CO(2), with concomitant reduction of NADP to NADPH. In Citrobacter freundii, this protein is 6-phosphogluconate dehydrogenase, decarboxylating (gnd).